The chain runs to 533 residues: INAEKMVLKFGRKTRKFATYVVAAGLQYGAEGGMLHTFFKMAWLGEIPALPVFGDGTNVIPTIHVLDLAGVIQNVIDHTPKPHYLVAVDESVHTLEDIVKCISKNTGPGKIQKIPRENAYLTKDLTQDCLDHLLVNLRMEALFVKENFNIRWVAQTGFVENINSILKEYKQSRGLMPVKICILGPPAVGKSSIAEELAKYYKLHHIQLKDVISEAIAKLETIVAPKDIGEGKEEVEEEEEEENVEDAQELLDGIKESMEQNAGQLDDQYIIRFMKEKLKSMPCRNQGYILDGFPKTYDQAKDLFNQEDEEEEDEVRGRMFPFDKLIIPEFVCALDASDEFLKERVINLPERIVAGTHYSQDRFLRALSNYRDINIEDETVFNYFDEIEIHPIHIDVGKLEDAQNRLAIKQLIKEIGEPRNYGLTDEEKAEEERKAAEERLAREAAEEAEREHQEAVEMAEKIARWEEWNKRLEEVKREERELLEAQSIPLRNYLMTYVMPTLIQGLNECCNVRPEDPVDFLAEYLFKNNPEAQ.

Residues 177–426 form an adenylate kinase region; that stretch reads PVKICILGPP…EPRNYGLTDE (250 aa). 187–192 provides a ligand contact to ATP; the sequence is AVGKSS. The segment at 207–265 is NMP; the sequence is QLKDVISEAIAKLETIVAPKDIGEGKEEVEEEEEEENVEDAQELLDGIKESMEQNAGQL. AMP is bound by residues 242 to 265, 292 to 295, and Gln299; these read ENVE…AGQL and GFPK. Residues 347–357 are LID; it reads NLPERIVAGTH. Arg365 is an AMP binding site. An ATP-binding site is contributed by Gly397. The stretch at 419 to 487 forms a coiled coil; the sequence is RNYGLTDEEK…EERELLEAQS (69 aa). The DPY-30 stretch occupies residues 489–533; sequence PLRNYLMTYVMPTLIQGLNECCNVRPEDPVDFLAEYLFKNNPEAQ.

The protein in the central section; belongs to the adenylate kinase family. In the C-terminal section; belongs to the dpy-30 family.

It is found in the cytoplasm. The protein resides in the cytosol. The protein localises to the cell projection. It localises to the cilium. Its subcellular location is the flagellum. It catalyses the reaction AMP + ATP = 2 ADP. It carries out the reaction a 2'-deoxyribonucleoside 5'-diphosphate + ATP = a 2'-deoxyribonucleoside 5'-triphosphate + ADP. The enzyme catalyses a ribonucleoside 5'-diphosphate + ATP = a ribonucleoside 5'-triphosphate + ADP. Its function is as follows. Nucleoside monophosphate (NMP) kinase that catalyzes the reversible transfer of the terminal phosphate group between nucleoside triphosphates and monophosphates. Has highest activity toward AMP, and weaker activity toward dAMP, CMP and dCMP. Also displays broad nucleoside diphosphate kinase activity. Involved in maintaining ciliary structure and function. The protein is Adenylate kinase 7 (AK7) of Macaca fascicularis (Crab-eating macaque).